Consider the following 197-residue polypeptide: Adenylate kinase (197 aa).

7–15 serves as a coordination point for ATP; sequence ALPGSGKTT.

This sequence belongs to the archaeal adenylate kinase family.

Its subcellular location is the cytoplasm. The enzyme catalyses AMP + ATP = 2 ADP. This Pyrobaculum aerophilum (strain ATCC 51768 / DSM 7523 / JCM 9630 / CIP 104966 / NBRC 100827 / IM2) protein is Adenylate kinase (adkA).